A 660-amino-acid polypeptide reads, in one-letter code: Acetyl-coenzyme A synthetase (660 aa).

CoA is bound by residues 197–200 and threonine 317; that span reads RGGK. Residues 397-399, 421-426, aspartate 512, and arginine 528 each bind ATP; these read GEP and DTFWQT. A CoA-binding site is contributed by serine 536. Residue arginine 539 coordinates ATP. Mg(2+) contacts are provided by valine 550 and valine 555. N6-acetyllysine is present on lysine 625.

Belongs to the ATP-dependent AMP-binding enzyme family. Mg(2+) serves as cofactor. Post-translationally, acetylated. Deacetylation by the SIR2-homolog deacetylase activates the enzyme.

It catalyses the reaction acetate + ATP + CoA = acetyl-CoA + AMP + diphosphate. In terms of biological role, catalyzes the conversion of acetate into acetyl-CoA (AcCoA), an essential intermediate at the junction of anabolic and catabolic pathways. AcsA undergoes a two-step reaction. In the first half reaction, AcsA combines acetate with ATP to form acetyl-adenylate (AcAMP) intermediate. In the second half reaction, it can then transfer the acetyl group from AcAMP to the sulfhydryl group of CoA, forming the product AcCoA. The polypeptide is Acetyl-coenzyme A synthetase (Cupriavidus metallidurans (strain ATCC 43123 / DSM 2839 / NBRC 102507 / CH34) (Ralstonia metallidurans)).